A 138-amino-acid chain; its full sequence is Probable glycine cleavage system H protein 1 (138 aa).

A Lipoyl-binding domain is found at 30-112 (IATVGITDYA…YGRGWIFKLK (83 aa)). Lysine 71 is subject to N6-lipoyllysine.

This sequence belongs to the GcvH family. The glycine cleavage system is composed of four proteins: P, T, L and H. Requires (R)-lipoate as cofactor.

Functionally, the glycine cleavage system catalyzes the degradation of glycine. The H protein shuttles the methylamine group of glycine from the P protein to the T protein. The sequence is that of Probable glycine cleavage system H protein 1 from Sulfolobus acidocaldarius (strain ATCC 33909 / DSM 639 / JCM 8929 / NBRC 15157 / NCIMB 11770).